The primary structure comprises 401 residues: All trans-polyprenyl-diphosphate synthase PDSS2 (401 aa).

It belongs to the FPP/GGPP synthase family. As to quaternary structure, heterotetramer composed of 2 PDSS1/DPS1 and 2 PDSS2/DLP1 subunits.

Its subcellular location is the mitochondrion. It carries out the reaction 7 isopentenyl diphosphate + (2E,6E)-farnesyl diphosphate = all-trans-decaprenyl diphosphate + 7 diphosphate. The enzyme catalyses 6 isopentenyl diphosphate + (2E,6E)-farnesyl diphosphate = all-trans-nonaprenyl diphosphate + 6 diphosphate. The protein operates within cofactor biosynthesis; ubiquinone biosynthesis. Its function is as follows. Heterotetrameric enzyme that catalyzes the condensation of farnesyl diphosphate (FPP), which acts as a primer, and isopentenyl diphosphate (IPP) to produce prenyl diphosphates of varying chain lengths and participates in the determination of the side chain of ubiquinone. Supplies nona and decaprenyl diphosphate, the precursors for the side chain of the isoprenoid quinones ubiquinone-9 (Q9) and ubiquinone-10 (Q10) respectively. The enzyme adds isopentenyl diphosphate molecules sequentially to farnesyl diphosphate with trans stereochemistry. May play a role during cerebellar development. May regulate mitochondrial respiratory chain function. This chain is All trans-polyprenyl-diphosphate synthase PDSS2, found in Mus musculus (Mouse).